The primary structure comprises 363 residues: Pyruvate dehydrogenase E1 component subunit beta-1, mitochondrial (363 aa).

Residues 1 to 29 (MLGILRQRAIDGASTLRRTRFALVSARSY) constitute a mitochondrion transit peptide. Glutamate 92 contributes to the thiamine diphosphate binding site. K(+)-binding residues include isoleucine 145, alanine 193, isoleucine 194, and aspartate 196. Glycyl lysine isopeptide (Lys-Gly) (interchain with G-Cter in ubiquitin) cross-links involve residues lysine 247 and lysine 254.

In terms of assembly, tetramer of 2 alpha and 2 beta subunits. Thiamine diphosphate is required as a cofactor. In terms of tissue distribution, expressed in roots, immature rosettes, and mature rosettes.

The protein localises to the mitochondrion matrix. The enzyme catalyses N(6)-[(R)-lipoyl]-L-lysyl-[protein] + pyruvate + H(+) = N(6)-[(R)-S(8)-acetyldihydrolipoyl]-L-lysyl-[protein] + CO2. Functionally, the pyruvate dehydrogenase complex catalyzes the overall conversion of pyruvate to acetyl-CoA and CO(2). It contains multiple copies of three enzymatic components: pyruvate dehydrogenase (E1), dihydrolipoamide acetyltransferase (E2) and lipoamide dehydrogenase (E3). The protein is Pyruvate dehydrogenase E1 component subunit beta-1, mitochondrial (PDH2) of Arabidopsis thaliana (Mouse-ear cress).